The primary structure comprises 1066 residues: E3 ubiquitin-protein ligase RNF31 (1066 aa).

The polyubiquitin-binding stretch occupies residues 1–479; sequence MPGDEERGFL…PEKQRQDKMR (479 aa). Residues 70–141 form the PUB domain; it reads TLSTALNILE…SFPEGQEEPD (72 aa). The segment at 251 to 287 is disordered; sequence LRQALPGSHQTASLSSSLPASSQPRPPSSSLALGDSS. A compositionally biased stretch (low complexity) spans 262-287; sequence ASLSSSLPASSQPRPPSSSLALGDSS. 2 consecutive RanBP2-type zinc fingers follow at residues 293–325 and 344–373; these read PANA…PKGC and ARDQ…PRLA. A Phosphoserine modification is found at S377. A RanBP2-type 3 zinc finger spans residues 403 to 432; it reads QPQVWYCDHCTFCNSGPVWVCAMCNRTRDP. Positions 434 to 478 are disordered; sequence PTQPALQSYPSSLEKGRPKPGSSQHLGSSLPASCGDPEKQRQDKM. Polar residues predominate over residues 454–464; that stretch reads GSSQHLGSSLP. Positions 469 to 478 are enriched in basic and acidic residues; that stretch reads DPEKQRQDKM. The interaction with RBCK1 stretch occupies residues 557 to 610; that stretch reads GNLDEAVEECVRARRRKVHELQSLGFGPKEGSLQALFQHGGDVARALTELQRQR. One can recognise a UBA domain in the interval 558-609; it reads NLDEAVEECVRARRRKVHELQSLGFGPKEGSLQALFQHGGDVARALTELQRQ. Residues 689 to 923 form a TRIAD supradomain region; it reads LAQECAVCGW…KSLHGHHPRD (235 aa). Zn(2+) is bound by residues C693, C696, C711, C713, C716, C719, C738, C741, C793, C796, C811, C814, C819, C822, H830, C835, C865, and C868. The RING-type 1 zinc-finger motif lies at 693–743; that stretch reads CAVCGWALPRNRMQALISCECTICPECFRQHFTIALKEKHITDMVCPACGR. An IBR-type zinc finger spans residues 773 to 835; that stretch reads ALFHKKLTEA…WEEQHRGRSC (63 aa). The RING-type 2; atypical zinc-finger motif lies at 865-895; sequence CPKCKFSYALARGGCMHFHCTQCRHQFCSGC. The active site involves C879. Zn(2+) is bound by residues C884, C887, C892, C895, C910, and H919. Residues 904–1066 form an LDD domain region; it reads KCPDPNCKVK…LGQSIARRRK (163 aa).

Belongs to the RBR family. Component of the LUBAC complex (linear ubiquitin chain assembly complex) which consists of SHARPIN, RBCK1 and RNF31. LUBAC has a MW of approximately 600 kDa suggesting a heteromultimeric assembly of its subunits. Associates with the TNF-R1 signaling complex (TNF-RSC) in a stimulation-dependent manner. Interacts (via the PUB domain) with OTULIN (via the PIM motif); the interaction is direct. Interacts (via the PUB domain) with VCP (via the PIM motif). Interacts (via the PUB domain) with SPATA2 (via the PIM motif); interaction is direct and bridges RNF31 and CYLD. Interacts with CYLD; the interaction is indirect and is mediated via SPATA2. Interacts with MUSK. Interacts with CARD11, promoting linear ubiquitination of BCL10. Post-translationally, autoubiquitinated. Interaction with OTULIN is required to suppress formation of 'Met-1'-linked polyubiquitin chains and prevent subsequent inactivation of the LUBAC complex. In terms of processing, cleaved by caspase during apoptosis. As to expression, widely expressed (at protein level). Not expressed in heart.

The protein localises to the cytoplasm. It catalyses the reaction [E2 ubiquitin-conjugating enzyme]-S-ubiquitinyl-L-cysteine + [acceptor protein]-L-lysine = [E2 ubiquitin-conjugating enzyme]-L-cysteine + [acceptor protein]-N(6)-ubiquitinyl-L-lysine.. The protein operates within protein modification; protein ubiquitination. In terms of biological role, E3 ubiquitin-protein ligase component of the LUBAC complex which conjugates linear ('Met-1'-linked) polyubiquitin chains to substrates and plays a key role in NF-kappa-B activation and regulation of inflammation. LUBAC conjugates linear polyubiquitin to IKBKG and RIPK1 and is involved in activation of the canonical NF-kappa-B and the JNK signaling pathways. Linear ubiquitination mediated by the LUBAC complex interferes with TNF-induced cell death and thereby prevents inflammation. LUBAC is recruited to the TNF-R1 signaling complex (TNF-RSC) following polyubiquitination of TNF-RSC components by BIRC2 and/or BIRC3 and to conjugate linear polyubiquitin to IKBKG and possibly other components contributing to the stability of the complex. The LUBAC complex is also involved in innate immunity by conjugating linear polyubiquitin chains at the surface of bacteria invading the cytosol to form the ubiquitin coat surrounding bacteria. LUBAC is not able to initiate formation of the bacterial ubiquitin coat, and can only promote formation of linear polyubiquitins on pre-existing ubiquitin. Recruited to the surface of bacteria by RNF213, which initiates the bacterial ubiquitin coat. The bacterial ubiquitin coat acts as an 'eat-me' signal for xenophagy and promotes NF-kappa-B activation. Together with OTULIN, the LUBAC complex regulates the canonical Wnt signaling during angiogenesis. RNF31 is required for linear ubiquitination of BCL10, thereby promoting TCR-induced NF-kappa-B activation. Binds polyubiquitin of different linkage types. The chain is E3 ubiquitin-protein ligase RNF31 from Mus musculus (Mouse).